Consider the following 112-residue polypeptide: ATP-dependent Clp protease adapter protein ClpS (112 aa).

It belongs to the ClpS family. In terms of assembly, binds to the N-terminal domain of the chaperone ClpA.

Its function is as follows. Involved in the modulation of the specificity of the ClpAP-mediated ATP-dependent protein degradation. The chain is ATP-dependent Clp protease adapter protein ClpS from Rhodococcus opacus (strain B4).